The following is a 303-amino-acid chain: UDP-3-O-acyl-N-acetylglucosamine deacetylase (303 aa).

Residues histidine 78, histidine 237, and aspartate 241 each coordinate Zn(2+). Residue histidine 264 is the Proton donor of the active site.

This sequence belongs to the LpxC family. The cofactor is Zn(2+).

It catalyses the reaction a UDP-3-O-[(3R)-3-hydroxyacyl]-N-acetyl-alpha-D-glucosamine + H2O = a UDP-3-O-[(3R)-3-hydroxyacyl]-alpha-D-glucosamine + acetate. It functions in the pathway glycolipid biosynthesis; lipid IV(A) biosynthesis; lipid IV(A) from (3R)-3-hydroxytetradecanoyl-[acyl-carrier-protein] and UDP-N-acetyl-alpha-D-glucosamine: step 2/6. In terms of biological role, catalyzes the hydrolysis of UDP-3-O-myristoyl-N-acetylglucosamine to form UDP-3-O-myristoylglucosamine and acetate, the committed step in lipid A biosynthesis. The polypeptide is UDP-3-O-acyl-N-acetylglucosamine deacetylase (Chromohalobacter salexigens (strain ATCC BAA-138 / DSM 3043 / CIP 106854 / NCIMB 13768 / 1H11)).